Reading from the N-terminus, the 38-residue chain is MKTKTSIKQICNLCKIVRRNKRLVNTCKLHKNHKHKQK.

The protein belongs to the bacterial ribosomal protein bL36 family.

The protein resides in the plastid. The protein localises to the apicoplast. This is Large ribosomal subunit protein bL36c (rpl36) from Theileria parva (East coast fever infection agent).